We begin with the raw amino-acid sequence, 101 residues long: UPF0235 protein Maeo_0841 (101 aa).

The protein belongs to the UPF0235 family.

This Methanococcus aeolicus (strain ATCC BAA-1280 / DSM 17508 / OCM 812 / Nankai-3) protein is UPF0235 protein Maeo_0841.